Reading from the N-terminus, the 199-residue chain is Peroxiredoxin-1 (199 aa).

N-acetylserine is present on S2. Residues 6–165 (AKIGHPAPNF…TLRLVQAFQF (160 aa)) enclose the Thioredoxin domain. K7 is modified (N6-acetyllysine; alternate). K7 is covalently cross-linked (Glycyl lysine isopeptide (Lys-Gly) (interchain with G-Cter in SUMO2); alternate). N6-acetyllysine occurs at positions 16 and 27. S32 carries the phosphoserine modification. K35 is modified (N6-acetyllysine; alternate). Residue K35 is modified to N6-succinyllysine; alternate. Residue C52 is the Cysteine sulfenic acid (-SOH) intermediate of the active site. Position 90 is a phosphothreonine; by CDK1 (T90). A Glycyl lysine isopeptide (Lys-Gly) (interchain with G-Cter in SUMO2) cross-link involves residue K120. K136 bears the N6-acetyllysine mark. The segment at 176–199 (GWKPGSDTIKPDVQKSKEYFSKQK) is disordered. Residues 184 to 199 (IKPDVQKSKEYFSKQK) are compositionally biased toward basic and acidic residues. K185 participates in a covalent cross-link: Glycyl lysine isopeptide (Lys-Gly) (interchain with G-Cter in SUMO1). N6-acetyllysine is present on K197.

It belongs to the peroxiredoxin family. AhpC/Prx1 subfamily. As to quaternary structure, homodimer; disulfide-linked, upon oxidation. 5 homodimers assemble to form a ring-like decamer. Interacts with GDPD5; forms a mixed-disulfide with GDPD5. Interacts with SESN1 and SESN2. Interacts with FAM107A. Phosphorylated on Thr-90 during the M-phase, which leads to a more than 80% decrease in enzymatic activity. Post-translationally, acetylation increases reducing activity and resistance to superoxidation. Deacetylated by HDAC6 which decreases reducing activity. In terms of processing, the enzyme can be inactivated by further oxidation of the cysteine sulfenic acid (C(P)-SOH) to sulphinic acid (C(P)-SO2H) instead of its condensation to a disulfide bond. It can be reactivated by forming a transient disulfide bond with sulfiredoxin SRXN1, which reduces the cysteine sulfinic acid in an ATP- and Mg-dependent manner.

Its subcellular location is the cytoplasm. The protein resides in the melanosome. The catalysed reaction is a hydroperoxide + [thioredoxin]-dithiol = an alcohol + [thioredoxin]-disulfide + H2O. Functionally, thiol-specific peroxidase that catalyzes the reduction of hydrogen peroxide and organic hydroperoxides to water and alcohols, respectively. Plays a role in cell protection against oxidative stress by detoxifying peroxides and as sensor of hydrogen peroxide-mediated signaling events. Might participate in the signaling cascades of growth factors and tumor necrosis factor-alpha by regulating the intracellular concentrations of H(2)O(2). Reduces an intramolecular disulfide bond in GDPD5 that gates the ability to GDPD5 to drive postmitotic motor neuron differentiation. The chain is Peroxiredoxin-1 (PRDX1) from Homo sapiens (Human).